A 392-amino-acid polypeptide reads, in one-letter code: SH3 domain-binding protein 5-like (392 aa).

A disordered region spans residues 1-57; sequence MADLKKAAGGRETPQGELRSEVVEDEGPRSPVAEEPGGSGSNSSETKLSPREEEELD. Thr-13 is modified (phosphothreonine). Over residues 18-28 the composition is skewed to basic and acidic residues; that stretch reads LRSEVVEDEGP. Phosphoserine is present on residues Ser-30 and Ser-49. Coiled coils occupy residues 59–140 and 169–272; these read RIQE…YERA and WQEM…EQIH. The tract at residues 275 to 332 is disordered; the sequence is RRGLPPHPLGPRRSSPVGAEAGPEGIEDGDSGIEGAEGGGLEEGSSLGPGPGPDTDTL. The segment covering 317–332 has biased composition (low complexity); sequence EGSSLGPGPGPDTDTL. Residues Ser-342, Ser-349, Ser-357, Ser-361, and Ser-377 each carry the phosphoserine modification. A disordered region spans residues 364 to 392; that stretch reads GQELGAQSRGRRGSDIGVRGGRHQRSVSL. Residues 383 to 392 are compositionally biased toward basic residues; it reads GGRHQRSVSL.

The protein belongs to the SH3BP5 family.

Functionally, functions as a guanine nucleotide exchange factor (GEF) for RAB11A. The polypeptide is SH3 domain-binding protein 5-like (Sh3bp5l) (Mus musculus (Mouse)).